A 158-amino-acid polypeptide reads, in one-letter code: Cyclic pyranopterin monophosphate synthase (158 aa).

Substrate is bound by residues 74–76 and 112–113; these read MCH and ME. D127 is a catalytic residue.

The protein belongs to the MoaC family. As to quaternary structure, homohexamer; trimer of dimers.

The enzyme catalyses (8S)-3',8-cyclo-7,8-dihydroguanosine 5'-triphosphate = cyclic pyranopterin phosphate + diphosphate. The protein operates within cofactor biosynthesis; molybdopterin biosynthesis. In terms of biological role, catalyzes the conversion of (8S)-3',8-cyclo-7,8-dihydroguanosine 5'-triphosphate to cyclic pyranopterin monophosphate (cPMP). The polypeptide is Cyclic pyranopterin monophosphate synthase (Helicobacter pylori (strain J99 / ATCC 700824) (Campylobacter pylori J99)).